A 698-amino-acid chain; its full sequence is Elongation factor G 2 (698 aa).

Positions 8-290 (ERYRNIGIMA…AVVDYLPSPV (283 aa)) constitute a tr-type G domain. Residues 17 to 24 (AHIDAGKT), 88 to 92 (DTPGH), and 142 to 145 (NKMD) contribute to the GTP site.

Belongs to the TRAFAC class translation factor GTPase superfamily. Classic translation factor GTPase family. EF-G/EF-2 subfamily.

Its subcellular location is the cytoplasm. Functionally, catalyzes the GTP-dependent ribosomal translocation step during translation elongation. During this step, the ribosome changes from the pre-translocational (PRE) to the post-translocational (POST) state as the newly formed A-site-bound peptidyl-tRNA and P-site-bound deacylated tRNA move to the P and E sites, respectively. Catalyzes the coordinated movement of the two tRNA molecules, the mRNA and conformational changes in the ribosome. This Methylococcus capsulatus (strain ATCC 33009 / NCIMB 11132 / Bath) protein is Elongation factor G 2.